Reading from the N-terminus, the 403-residue chain is PP2A regulatory subunit TAP46 (403 aa).

Disordered stretches follow at residues 158 to 184 (ERRG…LDDD) and 351 to 403 (ANSS…TPCG). Acidic residues-rich tracts occupy residues 174-184 (ETEEDDVLDDD) and 366-375 (EDDEEDDDDA). Residues 376–391 (AQDKARAWDDWKDDNP) are compositionally biased toward basic and acidic residues.

It belongs to the IGBP1/TAP42 family. In terms of assembly, interacts with NPP4 and NPP5, two catalytic subunits (subunit C) of PP2A.

It is found in the cytoplasm. Its subcellular location is the nucleus. Functionally, involved in the regulation of the TOR signaling pathway. Seems to act as a regulator of PP2A catalytic activity. This is PP2A regulatory subunit TAP46 from Nicotiana benthamiana.